Reading from the N-terminus, the 186-residue chain is CASP-like protein ARALYDRAFT_316979 (186 aa).

Over 1 to 23 (MRRNGDGEEVVAKRRRRIKELVQ) the chain is Cytoplasmic. Residues 24-44 (VALRGGCLAASATAMAVMLTA) traverse the membrane as a helical segment. At 45 to 70 (TEEGVADIYGFKLTLSSNWSFSPSYQ) the chain is on the extracellular side. Residue Asn-62 is glycosylated (N-linked (GlcNAc...) asparagine). A helical transmembrane segment spans residues 71-91 (YVVGACTGTVLYSLFQLCLGV). Residues 92–115 (YRLLTGSPITPSRFQAWLCFTSDQ) are Cytoplasmic-facing. A helical transmembrane segment spans residues 116–132 (LFGYLMMSAGSAGSGVT). At 133-161 (NLNKTGIRHTPLPDFCKTLSSFCNHVALS) the chain is on the extracellular side. Asn-135 is a glycosylation site (N-linked (GlcNAc...) asparagine). A helical membrane pass occupies residues 162-182 (LLLVFLSFIFLASSSFFTVLV). Residues 183 to 186 (LSTP) lie on the Cytoplasmic side of the membrane.

The protein belongs to the Casparian strip membrane proteins (CASP) family. Homodimer and heterodimers.

It localises to the cell membrane. The sequence is that of CASP-like protein ARALYDRAFT_316979 from Arabidopsis lyrata subsp. lyrata (Lyre-leaved rock-cress).